The chain runs to 473 residues: Cannabinoid receptor 1 (473 aa).

The Extracellular segment spans residues 1 to 121; the sequence is MKSILDGLAD…LNPSQQLAIA (121 aa). The interval 2–23 is required for mitochondrial localization; the sequence is KSILDGLADTTFRTITTDLLYV. N-linked (GlcNAc...) asparagine glycans are attached at residues Asn-78 and Asn-84. The helical transmembrane segment at 122–142 threads the bilayer; that stretch reads VLSLTLGTFTVLENLLVLCVI. At 143–155 the chain is on the cytoplasmic side; sequence LHSRSLRCRPSYH. Residues 156-176 form a helical membrane-spanning segment; sequence FIGSLAVADLLGSVIFVYSFV. The Extracellular segment spans residues 177–188; sequence DFHVFHRKDSPN. The chain crosses the membrane as a helical span at residues 189-209; sequence VFLFKLGGVTASFTASVGSLF. Over 210–233 the chain is Cytoplasmic; it reads LTAIDRYISIHRPLAYKRIVTRPK. The helical transmembrane segment at 234-254 threads the bilayer; sequence AVVAFCLMWTIAIVIAVLPLL. The Extracellular segment spans residues 255–278; sequence GWNCKKLQSVCSDIFPLIDETYLM. A helical membrane pass occupies residues 279-299; it reads FWIGVTSVLLLFIVYAYMYIL. Topologically, residues 300–345 are cytoplasmic; it reads WKAHSHAVRMIQRGTQKSIIIHTSEDGKVQVTRPDQARMDIRLAKT. Residues 346-366 form a helical membrane-spanning segment; sequence LVLILVVLIICWGPLLAIMVY. The Extracellular portion of the chain corresponds to 367 to 378; that stretch reads DVFGKMNKLIKT. Residues 379-399 traverse the membrane as a helical segment; sequence VFAFCSMLCLLNSTVNPIIYA. At 400-473 the chain is on the cytoplasmic side; that stretch reads LRSKDLRHAF…VSTDTSAEAL (74 aa). Cys-416 carries S-palmitoyl cysteine lipidation. 2 positions are modified to phosphoserine: Ser-426 and Ser-430.

It belongs to the G-protein coupled receptor 1 family. Interacts (via C-terminus) with CNRIP1. Associates with G protein alpha subunits, including G(i) alpha-1/GNAI1, G(i) alpha-3/GNAI3 and G(o)-alpha/GNAO1; palmitoylation is important for interaction with GNAI3 and GNAO1. In terms of processing, palmitoylation at Cys-416 is important for recruitment at both plasma membrane and lipid rafts and association with G protein alpha subunits. As to expression, expressed in brain neurons (at protein level). Detected throughout the striatum, cortex and hippocampus, with highest levels in the lateral striatum. In rostral brain regions, high expression levels in the dorsal lateral striatum, while in the caudal brain regions, high levels are observed in the ventral lateral striatum. Expressed in neurons. In the hypothalamus, expressed in both GABAergic and glutamatergic presynaptic terminals of POMC neurons (at protein level). Expressed in striated muscles, including skeletal muscles (gastrocnemius and rectus abdominis) and myocardium (at protein level). Expressed in the liver, with highest levels in Kupffer cells and lower levels in endothelial cells as well as hepatocytes, particularly in perivascular areas (at protein level). The hepatic expression level is up-regulated in obese mice compared to lean animals.

Its subcellular location is the cell membrane. It localises to the mitochondrion outer membrane. It is found in the cell projection. The protein resides in the axon. The protein localises to the presynapse. Hemopressin, a peptide derived from hemoglobin subunit alpha (HBA1 and/or HBA2), acts as an antagonist peptide: hemopressin-binding efficiently blocks cannabinoid receptor CNR1 and subsequent signaling. G-protein coupled receptor for cannabinoids, including endocannabinoids (eCBs), such as N-arachidonoylethanolamide (also called anandamide or AEA) and 2-arachidonoylglycerol (2-AG). Mediates many cannabinoid-induced effects, acting, among others, on food intake, memory loss, gastrointestinal motility, catalepsy, ambulatory activity, anxiety, chronic pain. Signaling typically involves reduction in cyclic AMP. In the hypothalamus, may have a dual effect on mitochondrial respiration depending upon the agonist dose and possibly upon the cell type. Increases respiration at low doses, while decreases respiration at high doses. At high doses, CNR1 signal transduction involves G-protein alpha-i protein activation and subsequent inhibition of mitochondrial soluble adenylate cyclase, decrease in cyclic AMP concentration, inhibition of protein kinase A (PKA)-dependent phosphorylation of specific subunits of the mitochondrial electron transport system, including NDUFS2. In the hypothalamus, inhibits leptin-induced reactive oxygen species (ROS) formation and mediates cannabinoid-induced increase in SREBF1 and FASN gene expression. In response to cannabinoids, drives the release of orexigenic beta-endorphin, but not that of melanocyte-stimulating hormone alpha/alpha-MSH, from hypothalamic POMC neurons, hence promoting food intake. In the hippocampus, regulates cellular respiration and energy production in response to cannabinoids. Involved in cannabinoid-dependent depolarization-induced suppression of inhibition (DSI), a process in which depolarization of CA1 postsynaptic pyramidal neurons mobilizes eCBs, which retrogradely activate presynaptic CB1 receptors, transiently decreasing GABAergic inhibitory neurotransmission. Also reduces excitatory synaptic transmission. In superior cervical ganglions and cerebral vascular smooth muscle cells, inhibits voltage-gated Ca(2+) channels in a constitutive, as well as agonist-dependent manner. In cerebral vascular smooth muscle cells, cannabinoid-induced inhibition of voltage-gated Ca(2+) channels leads to vasodilation and decreased vascular tone. Induces leptin production in adipocytes and reduces LRP2-mediated leptin clearance in the kidney, hence participating in hyperleptinemia. In adipose tissue, CNR1 signaling leads to increased expression of SREBF1, ACACA and FASN genes. In the liver, activation by endocannabinoids leads to increased de novo lipogenesis and reduced fatty acid catabolism, associated with increased expression of SREBF1/SREBP-1, GCK, ACACA, ACACB and FASN genes. May also affect de novo cholesterol synthesis and HDL-cholesteryl ether uptake. Peripherally modulates energy metabolism. In high carbohydrate diet-induced obesity, may decrease the expression of mitochondrial dihydrolipoyl dehydrogenase/DLD in striated muscles, as well as that of selected glucose/ pyruvate metabolic enzymes, hence affecting energy expenditure through mitochondrial metabolism. In response to cannabinoid anandamide, elicits a pro-inflammatory response in macrophages, which involves NLRP3 inflammasome activation and IL1B and IL18 secretion. In macrophages infiltrating pancreatic islets, this process may participate in the progression of type-2 diabetes and associated loss of pancreatic beta-cells. The polypeptide is Cannabinoid receptor 1 (Cnr1) (Mus musculus (Mouse)).